The primary structure comprises 415 residues: Gamma-glutamyl phosphate reductase (415 aa).

The protein belongs to the gamma-glutamyl phosphate reductase family.

It localises to the cytoplasm. It carries out the reaction L-glutamate 5-semialdehyde + phosphate + NADP(+) = L-glutamyl 5-phosphate + NADPH + H(+). Its pathway is amino-acid biosynthesis; L-proline biosynthesis; L-glutamate 5-semialdehyde from L-glutamate: step 2/2. Catalyzes the NADPH-dependent reduction of L-glutamate 5-phosphate into L-glutamate 5-semialdehyde and phosphate. The product spontaneously undergoes cyclization to form 1-pyrroline-5-carboxylate. The polypeptide is Gamma-glutamyl phosphate reductase (Bacillus cereus (strain ATCC 10987 / NRS 248)).